The chain runs to 486 residues: Ribulose bisphosphate carboxylase large chain 1 (486 aa).

Positions 125 and 175 each coordinate substrate. Catalysis depends on Lys-177, which acts as the Proton acceptor. Substrate is bound at residue Lys-179. 3 residues coordinate Mg(2+): Lys-203, Asp-205, and Glu-206. The residue at position 203 (Lys-203) is an N6-carboxylysine. Residue His-295 is the Proton acceptor of the active site. The substrate site is built by Arg-296, His-328, and Ser-380.

The protein belongs to the RuBisCO large chain family. Type I subfamily. Heterohexadecamer of 8 large chains and 8 small chains. It depends on Mg(2+) as a cofactor.

The catalysed reaction is 2 (2R)-3-phosphoglycerate + 2 H(+) = D-ribulose 1,5-bisphosphate + CO2 + H2O. The enzyme catalyses D-ribulose 1,5-bisphosphate + O2 = 2-phosphoglycolate + (2R)-3-phosphoglycerate + 2 H(+). Its function is as follows. RuBisCO catalyzes two reactions: the carboxylation of D-ribulose 1,5-bisphosphate, the primary event in carbon dioxide fixation, as well as the oxidative fragmentation of the pentose substrate. Both reactions occur simultaneously and in competition at the same active site. The chain is Ribulose bisphosphate carboxylase large chain 1 from Bradyrhizobium sp. (strain ORS 278).